A 244-amino-acid chain; its full sequence is Cell division protein ZipA (244 aa).

The Periplasmic portion of the chain corresponds to 1–4 (MSDM). A helical transmembrane segment spans residues 5–25 (AMIRIGILIAGLLLVAAIFLF). The Cytoplasmic segment spans residues 26-244 (GRPKKSPQGR…APPLTKSPRW (219 aa)). The interval 30-91 (KSPQGRRVDK…GAGGNDVGKR (62 aa)) is disordered. The span at 35–50 (RRVDKDDTQPRERREP) shows a compositional bias: basic and acidic residues.

The protein belongs to the ZipA family. In terms of assembly, interacts with FtsZ via their C-terminal domains.

It localises to the cell inner membrane. Its function is as follows. Essential cell division protein that stabilizes the FtsZ protofilaments by cross-linking them and that serves as a cytoplasmic membrane anchor for the Z ring. Also required for the recruitment to the septal ring of downstream cell division proteins. In Xanthomonas campestris pv. campestris (strain ATCC 33913 / DSM 3586 / NCPPB 528 / LMG 568 / P 25), this protein is Cell division protein ZipA.